Consider the following 1349-residue polypeptide: Protein turtle homolog B (1349 aa).

A signal peptide spans 1–20 (MIWYVATFIASVIGTRGLAA). The Extracellular segment spans residues 21 to 722 (EGAHGLREEP…DLTEDGLARP (702 aa)). Ig-like domains are found at residues 24–129 (HGLR…HNGS), 139–226 (PTFT…LLVQ), 228–320 (PPFI…AYLT), 324–415 (PARV…ARLV), and 420–504 (PYFT…THLT). 2 disulfides stabilise this stretch: Cys45–Cys113 and Cys161–Cys208. Residues Asn241 and Asn258 are each glycosylated (N-linked (GlcNAc...) asparagine). 3 disulfide bridges follow: Cys250/Cys303, Cys346/Cys397, and Cys442/Cys488. 2 Fibronectin type-III domains span residues 512–604 (APGS…TLAF) and 614–708 (LVTP…STDI). Residue Asn624 is glycosylated (N-linked (GlcNAc...) asparagine). A helical membrane pass occupies residues 723–743 (VLAGIVATICFLAAAILFSTL). Residues 744–1349 (AACFVNKQRK…SPPERALSKL (606 aa)) lie on the Cytoplasmic side of the membrane. Disordered stretches follow at residues 758 to 817 (RKKD…EKEL), 911 to 1081 (QLTP…RGLP), and 1099 to 1349 (APKG…LSKL). Ser775, Ser783, and Ser794 each carry phosphoserine. Over residues 911-921 (QLTPLSSSQES) the composition is skewed to polar residues. Residues 985-998 (VPEVGSPLSSVMSS) show a composition bias toward low complexity. Polar residues-rich tracts occupy residues 1018 to 1033 (ENASNSTLPLTQTPTG), 1129 to 1141 (LVSQGQLRHTSQG), and 1199 to 1214 (SRLSPLTQSPLSSRTG). At Arg1136 the chain carries Omega-N-methylarginine. Residues Ser1207 and Ser1215 each carry the phosphoserine modification. Over residues 1251–1271 (STPSTGSPSQSSRSGSPSYRP) the composition is skewed to low complexity. A compositionally biased stretch (pro residues) spans 1283 to 1292 (PSPPPGPAPA).

Belongs to the immunoglobulin superfamily. Turtle family. In terms of assembly, found in a complex with MAGI2 and NLGN2, where it interacts with MAGI2 (via PDZ 5 and PDZ 6 domains). In terms of processing, N-glycosylated and sialylated. Not significantly O-glycosylated.

Its subcellular location is the postsynaptic cell membrane. It localises to the postsynaptic density. In terms of biological role, transmembrane protein which is abundantly expressed in interneurons, where it may regulate inhibitory synapse development. May mediate homophilic cell adhesion. This is Protein turtle homolog B (IGSF9B) from Homo sapiens (Human).